The following is a 410-amino-acid chain: Phytoene synthase 1, chloroplastic (410 aa).

The N-terminal 62 residues, 1–62 (MAIILVRAAS…EAGRPSPAVY (62 aa)), are a transit peptide targeting the chloroplast.

It belongs to the phytoene/squalene synthase family. As to quaternary structure, monomer. As to expression, expressed in embryos, endosperm and seedling leaves. Expressed in leaves and endosperm.

The protein resides in the plastid. The protein localises to the chloroplast stroma. The catalysed reaction is 2 (2E,6E,10E)-geranylgeranyl diphosphate = 15-cis-phytoene + 2 diphosphate. It participates in carotenoid biosynthesis; phytoene biosynthesis; all-trans-phytoene from geranylgeranyl diphosphate: step 1/1. Its function is as follows. Catalyzes the conversion of geranylgeranyl diphosphate to phytoene. Mediates the first committed step in carotenoid biosynthesis. This Zea mays (Maize) protein is Phytoene synthase 1, chloroplastic.